The primary structure comprises 318 residues: Protein-L-histidine N-pros-methyltransferase (318 aa).

The signal sequence occupies residues 1–18 (MRLLAGWLCLSLASVWLA). N-linked (GlcNAc...) asparagine glycosylation occurs at N35. The S-adenosyl-L-homocysteine site is built by E174, N210, and Y295.

Belongs to the METTL9 family.

The protein resides in the endoplasmic reticulum. It localises to the mitochondrion. The enzyme catalyses L-histidyl-[protein] + S-adenosyl-L-methionine = N(pros)-methyl-L-histidyl-[protein] + S-adenosyl-L-homocysteine + H(+). Protein-histidine N-methyltransferase that specifically catalyzes 1-methylhistidine (pros-methylhistidine) methylation of target proteins. Specifically methylates the second His of proteins with a His-x-His (HxH) motif (where 'x' is preferably a small amino acid), while exploiting the first one as a recognition signature. Catalyzes methylation of target proteins such as S100A9, NDUFB3, SLC39A5, SLC39A7, ARMC6 and DNAJB12; 1-methylhistidine modification may affect the binding of zinc and other metals to its target proteins. Constitutes the main methyltransferase for the 1-methylhistidine modification in cell. The sequence is that of Protein-L-histidine N-pros-methyltransferase from Homo sapiens (Human).